The sequence spans 63 residues: ATP synthase membrane subunit K, mitochondrial (63 aa).

Residues 15-37 (TMRGRANVAKATWASLGLVYVLV) traverse the membrane as a helical segment.

As to quaternary structure, F-type ATPases have 2 components, CF(1) - the catalytic core - and CF(0) - the membrane proton channel. CF(1) has five subunits: alpha(3), beta(3), gamma(1), delta(1), epsilon(1). CF(0) has three main subunits: a, b and c. The ATP synthase complex/complex V exists as a monomeric and a dimeric supercomplex that helps shape mitochondrial cristae to optimize proton flow.

It localises to the mitochondrion membrane. In terms of biological role, mitochondrial membrane ATP synthase (F(1)F(0) ATP synthase or Complex V) produces ATP from ADP in the presence of a proton gradient across the membrane which is generated by electron transport complexes of the respiratory chain. F-type ATPases consist of two structural domains, F(1) - containing the extramembraneous catalytic core and F(0) - containing the membrane proton channel, linked together by a central stalk and a peripheral stalk. During catalysis, ATP synthesis in the catalytic domain of F(1) is coupled via a rotary mechanism of the central stalk subunits to proton translocation. ATP5MK is a minor subunit of the mitochondrial membrane ATP synthase required for dimerization of the ATP synthase complex and as such regulates ATP synthesis in the mitochondria. This chain is ATP synthase membrane subunit K, mitochondrial, found in Drosophila melanogaster (Fruit fly).